A 66-amino-acid chain; its full sequence is ARDGYIADDKNCAYFCGRNAYCDEECKKKGAESGYCQWAGQYGNACWCYKLPDKVPIKVSGKCNGR.

In terms of domain architecture, LCN-type CS-alpha/beta spans 2-64; sequence RDGYIADDKN…VPIKVSGKCN (63 aa). Cystine bridges form between Cys-12/Cys-63, Cys-16/Cys-36, Cys-22/Cys-46, and Cys-26/Cys-48. Position 64 is an asparagine amide (Asn-64).

The protein belongs to the long (4 C-C) scorpion toxin superfamily. Sodium channel inhibitor family. Alpha subfamily. In terms of tissue distribution, expressed by the venom gland.

Its subcellular location is the secreted. Alpha toxins bind voltage-independently at site-3 of sodium channels (Nav) and inhibit the inactivation of the activated channels, thereby blocking neuronal transmission. The chain is Sodium channel neurotoxin MeuNaTxalpha-7 from Mesobuthus eupeus (Lesser Asian scorpion).